Here is a 953-residue protein sequence, read N- to C-terminus: UPF0746 protein DDB_G0281301 (953 aa).

Residues Met1 to Glu10 are compositionally biased toward basic and acidic residues. The segment at Met1 to Leu23 is disordered. Over residues Asn11–Asp21 the composition is skewed to acidic residues. The 35-residue stretch at Tyr35–Phe69 folds into the SAP domain.

The protein belongs to the UPF0746 family.

The sequence is that of UPF0746 protein DDB_G0281301 from Dictyostelium discoideum (Social amoeba).